The following is an 85-amino-acid chain: Cell division topological specificity factor (85 aa).

The protein belongs to the MinE family.

In terms of biological role, prevents the cell division inhibition by proteins MinC and MinD at internal division sites while permitting inhibition at polar sites. This ensures cell division at the proper site by restricting the formation of a division septum at the midpoint of the long axis of the cell. The sequence is that of Cell division topological specificity factor from Shewanella sp. (strain ANA-3).